The following is a 635-amino-acid chain: Voltage-gated potassium channel KCNC4 (635 aa).

Positions Met1–Cys24 are disordered. An inactivation gate region spans residues Met1–Glu28. At Met1–Arg226 the chain is on the cytoplasmic side. Phosphoserine occurs at positions 8, 9, 15, and 21. His116, Cys122, Cys143, and Cys144 together coordinate Zn(2+). The interval Ile160–Asp180 is disordered. Residues Val227 to Thr247 traverse the membrane as a helical segment. N-linked (GlcNAc...) asparagine glycans are attached at residues Asn256 and Asn265. The chain crosses the membrane as a helical span at residues Glu278–Val298. Residues Arg299 to Asn312 are Cytoplasmic-facing. A helical membrane pass occupies residues Leu313–Gly333. The helical; Voltage-sensor transmembrane segment at Phe345–Phe364 threads the bilayer. Over Val365–Glu380 the chain is Cytoplasmic. Residues Phe381 to Tyr401 form a helical membrane-spanning segment. Positions 436, 437, 438, and 439 each coordinate K(+). Residues Thr436–Asp441 carry the Selectivity filter motif. Residues Val452–Val472 traverse the membrane as a helical segment. Over Asn473–His635 the chain is Cytoplasmic. Positions Lys490 to Arg580 are disordered. Over residues Ala527 to Gln542 the composition is skewed to basic and acidic residues.

Belongs to the potassium channel family. C (Shaw) (TC 1.A.1.2) subfamily. Kv3.4/KCNC4 sub-subfamily. In terms of assembly, homotetramer. Heterotetramer of potassium channel proteins. Phosphorylation of serine residues in the inactivation gate inhibits rapid channel closure.

It is found in the membrane. The catalysed reaction is K(+)(in) = K(+)(out). Functionally, voltage-gated potassium channel that opens in response to the voltage difference across the membrane, forming a potassium-selective channel through which potassium ions pass in accordance with their electrochemical gradient. The channel displays rapid activation and inactivation kinetics. This chain is Voltage-gated potassium channel KCNC4, found in Homo sapiens (Human).